A 294-amino-acid chain; its full sequence is Zinc finger protein 346 (294 aa).

An N-acetylmethionine modification is found at Met-1. Residues 1–19 (MECPAPDATDAADPGEAGP) are compositionally biased toward low complexity. Residues 1 to 35 (MECPAPDATDAADPGEAGPYKGSEEPEGREPDGVR) are disordered. The segment covering 22-35 (GSEEPEGREPDGVR) has biased composition (basic and acidic residues). A Matrin-type 1 zinc finger spans residues 70–104 (FTSTQCKVCCAMLISESQKLAHYQSKKHANKVKRY). Positions 75, 78, 91, and 97 each coordinate Zn(2+). Lys-114 is covalently cross-linked (Glycyl lysine isopeptide (Lys-Gly) (interchain with G-Cter in SUMO2)). The segment at 131–165 (DKNHCCPICNMTFSSPAVAQSHYLGKTHAKSLKLK) adopts a Matrin-type 2 zinc-finger fold. Zn(2+)-binding residues include Cys-136, Cys-139, His-152, and His-158. Lys-170 is covalently cross-linked (Glycyl lysine isopeptide (Lys-Gly) (interchain with G-Cter in SUMO2)). Matrin-type zinc fingers lie at residues 182 to 216 (DPDK…ETKL) and 236 to 270 (GKGY…SPKT). The segment at 269–294 (KTLVTLGSQTPVQTQPTPKDSSTVQD) is disordered.

Forms a heteromeric complex with XPO5 and ILF3. Found in a nuclear export complex with XPO5, RAN, ILF3, ZNF346 and double-stranded RNA. Interacts with XPO5. Interacts with ILF3 in an RNA-independent manner. In terms of tissue distribution, expressed in all tissues tested, including heart, brain, spleen, lung, liver, muscle, kidney and testis. Exogenous expression induced apoptosis.

Its subcellular location is the nucleus. It is found in the nucleolus. The protein localises to the cytoplasm. Binds with low affinity to dsDNA and ssRNA, and with high affinity to dsRNA, with no detectable sequence specificity. May bind to specific miRNA hairpins. This is Zinc finger protein 346 (Znf346) from Mus musculus (Mouse).